The primary structure comprises 1131 residues: DNA-directed RNA polymerase subunit beta (1131 aa).

Residues Q1108 to E1131 are disordered. Positions L1122–E1131 are enriched in basic and acidic residues.

This sequence belongs to the RNA polymerase beta chain family. In cyanobacteria the RNAP catalytic core is composed of 2 alpha, 1 beta, 1 beta', 1 gamma and 1 omega subunit. When a sigma factor is associated with the core the holoenzyme is formed, which can initiate transcription.

It carries out the reaction RNA(n) + a ribonucleoside 5'-triphosphate = RNA(n+1) + diphosphate. Its function is as follows. DNA-dependent RNA polymerase catalyzes the transcription of DNA into RNA using the four ribonucleoside triphosphates as substrates. This is DNA-directed RNA polymerase subunit beta from Nostoc sp. (strain PCC 7120 / SAG 25.82 / UTEX 2576).